Here is a 347-residue protein sequence, read N- to C-terminus: Heat-inducible transcription repressor HrcA (347 aa).

This sequence belongs to the HrcA family.

Its function is as follows. Negative regulator of class I heat shock genes (grpE-dnaK-dnaJ and groELS operons). Prevents heat-shock induction of these operons. This chain is Heat-inducible transcription repressor HrcA, found in Desulforamulus reducens (strain ATCC BAA-1160 / DSM 100696 / MI-1) (Desulfotomaculum reducens).